A 1288-amino-acid polypeptide reads, in one-letter code: 5-oxoprolinase (1288 aa).

Thr-151 bears the Phosphothreonine mark. A disordered region spans residues 1248-1272; sequence PGGGGYGDPEDPAPPPGSPPQALAF. At Ser-1265 the chain carries Phosphoserine.

Belongs to the oxoprolinase family. Homodimer.

The protein resides in the cytoplasm. It localises to the cytosol. It catalyses the reaction 5-oxo-L-proline + ATP + 2 H2O = L-glutamate + ADP + phosphate + H(+). Its function is as follows. Catalyzes the cleavage of 5-oxo-L-proline to form L-glutamate coupled to the hydrolysis of ATP to ADP and inorganic phosphate. The chain is 5-oxoprolinase from Homo sapiens (Human).